A 316-amino-acid polypeptide reads, in one-letter code: Pantothenate kinase (316 aa).

95-102 is a binding site for ATP; that stretch reads GSVAVGKS.

Belongs to the prokaryotic pantothenate kinase family.

It is found in the cytoplasm. It catalyses the reaction (R)-pantothenate + ATP = (R)-4'-phosphopantothenate + ADP + H(+). The protein operates within cofactor biosynthesis; coenzyme A biosynthesis; CoA from (R)-pantothenate: step 1/5. The polypeptide is Pantothenate kinase (Salmonella agona (strain SL483)).